The sequence spans 213 residues: Cysteine dioxygenase (213 aa).

Residues His-100, His-102, and His-160 each contribute to the Fe cation site. Positions Cys-107 to Tyr-177 form a cross-link, 3'-(S-cysteinyl)-tyrosine (Cys-Tyr).

This sequence belongs to the cysteine dioxygenase family. Fe cation is required as a cofactor. The thioether cross-link between Cys-107 and Tyr-177 plays a structural role through stabilizing the Fe(2+) ion, and prevents the production of highly damaging free hydroxyl radicals by holding the oxygen radical via hydroxyl hydrogen.

It carries out the reaction L-cysteine + O2 = 3-sulfino-L-alanine + H(+). The protein is Cysteine dioxygenase (CDO1) of Ajellomyces capsulatus (strain G186AR / H82 / ATCC MYA-2454 / RMSCC 2432) (Darling's disease fungus).